Consider the following 356-residue polypeptide: tRNA N6-adenosine threonylcarbamoyltransferase (356 aa).

His-115 and His-119 together coordinate Fe cation. Substrate-binding positions include 138–142 (LVSGG), Asp-171, Gly-184, and Asn-283. Position 311 (Asp-311) interacts with Fe cation.

It belongs to the KAE1 / TsaD family. The cofactor is Fe(2+).

Its subcellular location is the cytoplasm. The catalysed reaction is L-threonylcarbamoyladenylate + adenosine(37) in tRNA = N(6)-L-threonylcarbamoyladenosine(37) in tRNA + AMP + H(+). In terms of biological role, required for the formation of a threonylcarbamoyl group on adenosine at position 37 (t(6)A37) in tRNAs that read codons beginning with adenine. Is involved in the transfer of the threonylcarbamoyl moiety of threonylcarbamoyl-AMP (TC-AMP) to the N6 group of A37, together with TsaE and TsaB. TsaD likely plays a direct catalytic role in this reaction. The chain is tRNA N6-adenosine threonylcarbamoyltransferase from Prochlorococcus marinus (strain MIT 9303).